The chain runs to 275 residues: Voltage-dependent calcium channel gamma-5 subunit (275 aa).

4 consecutive transmembrane segments (helical) span residues 8-28 (ALTLLSSVFAVCGLGLLGIAV), 103-123 (FPLVSLFFMFIGFILSNIGHI), 129-149 (ILAFVSGIFFILSGLSLVVGL), and 181-201 (FAAISFLLTESAGVMSVYLFM).

It belongs to the PMP-22/EMP/MP20 family. CACNG subfamily. As to quaternary structure, the L-type calcium channel is composed of five subunits: alpha-1, alpha-2/delta, beta and gamma. Acts as an auxiliary subunit for AMPA-selective glutamate receptors (AMPARs). Found in a complex with GRIA1, GRIA2, GRIA3, GRIA4, CNIH2, CNIH3, CACNG2, CACNG3, CACNG4, CACNG7 and CACNG8. Interacts with GRIA1, GRIA2, GRIA3 and GRIA4.

It is found in the membrane. The protein resides in the postsynaptic density membrane. Regulates the gating properties of AMPA-selective glutamate receptors (AMPARs). Modulates their gating properties by accelerating their rates of activation, deactivation and desensitization. Displays subunit-specific AMPA receptor regulation. Shows specificity for GRIA1, GRIA4 and the long isoform of GRIA2. According to PubMed:18817736, shows only specificity for GRIA2 and specifically to the form of GRIA2 for which a single amino acid in the pore region has been edited from a glutamine to an arginine residue. Thought to stabilize the calcium channel in an inactivated (closed) state. In Rattus norvegicus (Rat), this protein is Voltage-dependent calcium channel gamma-5 subunit (Cacng5).